A 631-amino-acid polypeptide reads, in one-letter code: tRNA uridine 5-carboxymethylaminomethyl modification enzyme MnmG (631 aa).

FAD is bound by residues Gly-13–Gly-18, Val-125, and Ser-180. Position 273–287 (Gly-273–Phe-287) interacts with NAD(+). Gln-370 provides a ligand contact to FAD.

It belongs to the MnmG family. Homodimer. Heterotetramer of two MnmE and two MnmG subunits. It depends on FAD as a cofactor.

It is found in the cytoplasm. NAD-binding protein involved in the addition of a carboxymethylaminomethyl (cmnm) group at the wobble position (U34) of certain tRNAs, forming tRNA-cmnm(5)s(2)U34. In Vibrio parahaemolyticus serotype O3:K6 (strain RIMD 2210633), this protein is tRNA uridine 5-carboxymethylaminomethyl modification enzyme MnmG.